Consider the following 98-residue polypeptide: NADH-ubiquinone oxidoreductase chain 4L (98 aa).

A run of 3 helical transmembrane segments spans residues 1–21 (MSLI…GLLM), 29–49 (ALLC…LTIL), and 61–81 (IILL…LVMV).

The protein belongs to the complex I subunit 4L family. As to quaternary structure, core subunit of respiratory chain NADH dehydrogenase (Complex I) which is composed of 45 different subunits.

The protein localises to the mitochondrion inner membrane. It catalyses the reaction a ubiquinone + NADH + 5 H(+)(in) = a ubiquinol + NAD(+) + 4 H(+)(out). Core subunit of the mitochondrial membrane respiratory chain NADH dehydrogenase (Complex I) which catalyzes electron transfer from NADH through the respiratory chain, using ubiquinone as an electron acceptor. Part of the enzyme membrane arm which is embedded in the lipid bilayer and involved in proton translocation. The protein is NADH-ubiquinone oxidoreductase chain 4L (MT-ND4L) of Phocoena phocoena (Harbor porpoise).